Reading from the N-terminus, the 251-residue chain is Hydroxyacylglutathione hydrolase (251 aa).

Zn(2+)-binding residues include His53, His55, Asp57, His58, His110, Asp127, and His165.

The protein belongs to the metallo-beta-lactamase superfamily. Glyoxalase II family. In terms of assembly, monomer. Zn(2+) serves as cofactor.

The enzyme catalyses an S-(2-hydroxyacyl)glutathione + H2O = a 2-hydroxy carboxylate + glutathione + H(+). Its pathway is secondary metabolite metabolism; methylglyoxal degradation; (R)-lactate from methylglyoxal: step 2/2. Functionally, thiolesterase that catalyzes the hydrolysis of S-D-lactoyl-glutathione to form glutathione and D-lactic acid. The sequence is that of Hydroxyacylglutathione hydrolase from Escherichia coli (strain SMS-3-5 / SECEC).